A 61-amino-acid chain; its full sequence is Large ribosomal subunit protein uL30 (61 aa).

Belongs to the universal ribosomal protein uL30 family. Part of the 50S ribosomal subunit.

The polypeptide is Large ribosomal subunit protein uL30 (Shewanella halifaxensis (strain HAW-EB4)).